The following is a 137-amino-acid chain: Large ribosomal subunit protein uL16 (137 aa).

The protein belongs to the universal ribosomal protein uL16 family. Part of the 50S ribosomal subunit.

Its function is as follows. Binds 23S rRNA and is also seen to make contacts with the A and possibly P site tRNAs. This Streptococcus pyogenes serotype M1 protein is Large ribosomal subunit protein uL16.